A 95-amino-acid polypeptide reads, in one-letter code: Protein TusB (95 aa).

This sequence belongs to the DsrH/TusB family. As to quaternary structure, heterohexamer, formed by a dimer of trimers. The hexameric TusBCD complex contains 2 copies each of TusB, TusC and TusD. The TusBCD complex interacts with TusE.

It is found in the cytoplasm. Its function is as follows. Part of a sulfur-relay system required for 2-thiolation of 5-methylaminomethyl-2-thiouridine (mnm(5)s(2)U) at tRNA wobble positions. The polypeptide is Protein TusB (Cronobacter sakazakii (strain ATCC BAA-894) (Enterobacter sakazakii)).